A 202-amino-acid chain; its full sequence is Dephospho-CoA kinase (202 aa).

One can recognise a DPCK domain in the interval 3 to 202 (TIGITGGIGS…TKRPNPPDRL (200 aa)). 11–16 (GSGKSV) is an ATP binding site. The disordered stretch occupies residues 138 to 161 (RAMARDGSSAETMRQRMLSQEREQ).

Belongs to the CoaE family.

It is found in the cytoplasm. The catalysed reaction is 3'-dephospho-CoA + ATP = ADP + CoA + H(+). The protein operates within cofactor biosynthesis; coenzyme A biosynthesis; CoA from (R)-pantothenate: step 5/5. Functionally, catalyzes the phosphorylation of the 3'-hydroxyl group of dephosphocoenzyme A to form coenzyme A. The sequence is that of Dephospho-CoA kinase from Porphyromonas gingivalis (strain ATCC BAA-308 / W83).